The following is a 218-amino-acid chain: Flagellin B1 (218 aa).

Residues 1–12 (MNIKEFLSNKKG) constitute a propeptide that is removed on maturation. 5 N-linked (GlcNAc...) asparagine glycosylation sites follow: Asn-38, Asn-71, Asn-77, Asn-115, and Asn-136.

This sequence belongs to the archaeal flagellin family. In terms of processing, N-linked glycans consist of the 779 Da trisaccharide beta-ManNAc(Thr)-(1-4)-beta-GlcNAc3NAcA-(1-3)-beta-GlcNAc.

Its subcellular location is the archaeal flagellum. Its function is as follows. Flagellin is the subunit protein which polymerizes to form the filaments of archaeal flagella. This Methanococcus voltae protein is Flagellin B1 (flaB1).